The primary structure comprises 117 residues: Large ribosomal subunit protein bL17 (117 aa).

This sequence belongs to the bacterial ribosomal protein bL17 family. In terms of assembly, part of the 50S ribosomal subunit. Contacts protein L32.

This chain is Large ribosomal subunit protein bL17, found in Coprothermobacter proteolyticus (strain ATCC 35245 / DSM 5265 / OCM 4 / BT).